The primary structure comprises 342 residues: S-adenosylmethionine:tRNA ribosyltransferase-isomerase (342 aa).

Belongs to the QueA family. Monomer.

Its subcellular location is the cytoplasm. It catalyses the reaction 7-aminomethyl-7-carbaguanosine(34) in tRNA + S-adenosyl-L-methionine = epoxyqueuosine(34) in tRNA + adenine + L-methionine + 2 H(+). It participates in tRNA modification; tRNA-queuosine biosynthesis. In terms of biological role, transfers and isomerizes the ribose moiety from AdoMet to the 7-aminomethyl group of 7-deazaguanine (preQ1-tRNA) to give epoxyqueuosine (oQ-tRNA). The protein is S-adenosylmethionine:tRNA ribosyltransferase-isomerase of Streptococcus pyogenes serotype M6 (strain ATCC BAA-946 / MGAS10394).